The sequence spans 253 residues: MPIKPVGWICGQVLKNFSGRIEGIQKVIMDLIDEFKDEFPTILRLSQSNQKREPMQKPSKIRMAIALAKINRGTLIQGLNSISRSSKSVAKLLQPQLACRLLELRAISHRLLKEVNAPRQPLYNIQVRKGSLFEIISFPAKTALTSIMCASYAALIYLTVCVNAVLEKIMKIFQEEESIRQNREESENFRNAFSEPVLSEPLFPEGEIKAKPYRSLPEKPDSISDRPKLPANKLSNKIQVLHSVFDQSAEMNE.

The chain crosses the membrane as a helical span at residues 144-166 (LTSIMCASYAALIYLTVCVNAVL). Basic and acidic residues predominate over residues 210-228 (AKPYRSLPEKPDSISDRPK). A disordered region spans residues 210–231 (AKPYRSLPEKPDSISDRPKLPA).

It localises to the membrane. Its function is as follows. May play at role in testicular development/spermatogenesis and may be an important factor in male infertility. The chain is Spermatogenesis-associated protein 9 (SPATA9) from Bos taurus (Bovine).